The chain runs to 590 residues: UvrABC system protein C (590 aa).

The GIY-YIG domain maps to 14–91; that stretch reads DQPGCYLMKD…IKKYDPKYNV (78 aa). The UVR domain maps to 196–231; it reads NEVKKELEAKMLEASENLQFERAKEFRDQIAHIEST.

This sequence belongs to the UvrC family. As to quaternary structure, interacts with UvrB in an incision complex.

The protein localises to the cytoplasm. The UvrABC repair system catalyzes the recognition and processing of DNA lesions. UvrC both incises the 5' and 3' sides of the lesion. The N-terminal half is responsible for the 3' incision and the C-terminal half is responsible for the 5' incision. The chain is UvrABC system protein C from Bacillus licheniformis (strain ATCC 14580 / DSM 13 / JCM 2505 / CCUG 7422 / NBRC 12200 / NCIMB 9375 / NCTC 10341 / NRRL NRS-1264 / Gibson 46).